We begin with the raw amino-acid sequence, 579 residues long: Moesin a (579 aa).

Residues 5–295 form the FERM domain; the sequence is ISVRVTTMDA…GNHELYMRRR (291 aa). A coiled-coil region spans residues 306–448; sequence KAQAKEEKNH…EDEALEWQTK (143 aa). 3 disordered regions span residues 308 to 341, 376 to 418, and 464 to 519; these read QAKE…EKIE, EQER…EHLA, and KNKV…KNER. Basic and acidic residues predominate over residues 376-400; that stretch reads EQERKRAQEEAERLERERRLAEEAK. The span at 490 to 501 shows a compositional bias: low complexity; it reads AEASAELTSAAA. The segment covering 502 to 519 has biased composition (basic and acidic residues); the sequence is YKDRSEEERMTEAEKNER. Residues 517-551 adopt a coiled-coil conformation; the sequence is NERVQKHLLALTSELANARDETKKTQNDIIHAENV.

The protein localises to the cell membrane. It is found in the cell junction. Positively regulates endothelial adherens junction formation and stabilization. Is thereby required for intersegmental vessel luminal membrane formation and stabilization during tubulogenesis in the early stages of development, independent of blood flow dynamics. This is Moesin a from Danio rerio (Zebrafish).